The sequence spans 180 residues: NADH-quinone oxidoreductase subunit I (180 aa).

2 4Fe-4S ferredoxin-type domains span residues 48-80 (IVLTRDPDGDERCVACNLCAVACPVDCISLQKA) and 90-119 (EFFRINFSRCIFCGLCEEACPTTAIQLTPD). 8 residues coordinate [4Fe-4S] cluster: cysteine 60, cysteine 63, cysteine 66, cysteine 70, cysteine 99, cysteine 102, cysteine 105, and cysteine 109.

This sequence belongs to the complex I 23 kDa subunit family. NDH-1 is composed of 13 different subunits. Subunits NuoA, H, J, K, L, M, N constitute the membrane sector of the complex. [4Fe-4S] cluster serves as cofactor.

Its subcellular location is the cell inner membrane. It catalyses the reaction a quinone + NADH + 5 H(+)(in) = a quinol + NAD(+) + 4 H(+)(out). In terms of biological role, NDH-1 shuttles electrons from NADH, via FMN and iron-sulfur (Fe-S) centers, to quinones in the respiratory chain. The immediate electron acceptor for the enzyme in this species is believed to be ubiquinone. Couples the redox reaction to proton translocation (for every two electrons transferred, four hydrogen ions are translocated across the cytoplasmic membrane), and thus conserves the redox energy in a proton gradient. This chain is NADH-quinone oxidoreductase subunit I, found in Sodalis glossinidius (strain morsitans).